We begin with the raw amino-acid sequence, 115 residues long: Ribonuclease P protein component (115 aa).

The protein belongs to the RnpA family. As to quaternary structure, consists of a catalytic RNA component (M1 or rnpB) and a protein subunit.

It catalyses the reaction Endonucleolytic cleavage of RNA, removing 5'-extranucleotides from tRNA precursor.. Its function is as follows. RNaseP catalyzes the removal of the 5'-leader sequence from pre-tRNA to produce the mature 5'-terminus. It can also cleave other RNA substrates such as 4.5S RNA. The protein component plays an auxiliary but essential role in vivo by binding to the 5'-leader sequence and broadening the substrate specificity of the ribozyme. The polypeptide is Ribonuclease P protein component (Bacillus cereus (strain Q1)).